Reading from the N-terminus, the 176-residue chain is NAD(P)H-quinone oxidoreductase subunit 6, chloroplastic (176 aa).

Transmembrane regions (helical) follow at residues 10–30, 33–53, 63–83, 105–125, and 152–172; these read FLLV…VLFT, IFSA…YILA, LLIY…FMSG, ISLF…GIIW, and FFLP…GAIA.

The protein belongs to the complex I subunit 6 family. In terms of assembly, NDH is composed of at least 16 different subunits, 5 of which are encoded in the nucleus.

It is found in the plastid. Its subcellular location is the chloroplast thylakoid membrane. It carries out the reaction a plastoquinone + NADH + (n+1) H(+)(in) = a plastoquinol + NAD(+) + n H(+)(out). The catalysed reaction is a plastoquinone + NADPH + (n+1) H(+)(in) = a plastoquinol + NADP(+) + n H(+)(out). Functionally, NDH shuttles electrons from NAD(P)H:plastoquinone, via FMN and iron-sulfur (Fe-S) centers, to quinones in the photosynthetic chain and possibly in a chloroplast respiratory chain. The immediate electron acceptor for the enzyme in this species is believed to be plastoquinone. Couples the redox reaction to proton translocation, and thus conserves the redox energy in a proton gradient. This Spinacia oleracea (Spinach) protein is NAD(P)H-quinone oxidoreductase subunit 6, chloroplastic (ndhG).